Consider the following 430-residue polypeptide: uncharacterized protein (430 aa).

The chain crosses the membrane as a helical span at residues 207–223; that stretch reads GETYMFGSANGLQLSIY.

The protein resides in the host membrane. Its function is as follows. May play a role in phage assembly. This is an uncharacterized protein from Pseudomonas phage Pf1 (Bacteriophage Pf1).